The following is a 402-amino-acid chain: Putative PDZ domain-containing protein PDZK1P1 (402 aa).

2 PDZ domains span residues 12–93 (RLCY…VDKE) and 121–206 (IVEM…VDKE). Residues 230–258 (GSVKEAPAPTPTSLEVSSPPDTTEEEDHK) form a disordered region. The segment covering 240–250 (PTSLEVSSPPD) has biased composition (polar residues). The PDZ 3 domain maps to 261–341 (LCRLAKGENG…NVTLLVCGKK (81 aa)). Residues 362-402 (DTPPDSKEGIVVESKHDSHMAKERAHSTASHSSSNSEDTEM) are disordered. Residues 365–387 (PDSKEGIVVESKHDSHMAKERAH) are compositionally biased toward basic and acidic residues. Positions 388–402 (STASHSSSNSEDTEM) are enriched in low complexity.

This sequence belongs to the NHER family.

The chain is Putative PDZ domain-containing protein PDZK1P1 from Homo sapiens (Human).